A 193-amino-acid polypeptide reads, in one-letter code: dCTP deaminase (193 aa).

Residues 110–115 (RSSLAR), aspartate 128, 136–138 (VLE), tyrosine 171, lysine 178, and glutamine 182 contribute to the dCTP site. The Proton donor/acceptor role is filled by glutamate 138. The interval 171 to 193 (YHQRQDAKYHNQKGAVASRIDKD) is disordered.

It belongs to the dCTP deaminase family. In terms of assembly, homotrimer.

It carries out the reaction dCTP + H2O + H(+) = dUTP + NH4(+). The protein operates within pyrimidine metabolism; dUMP biosynthesis; dUMP from dCTP (dUTP route): step 1/2. Catalyzes the deamination of dCTP to dUTP. This is dCTP deaminase from Hamiltonella defensa subsp. Acyrthosiphon pisum (strain 5AT).